A 596-amino-acid chain; its full sequence is Probable protein S-acyltransferase 22 (596 aa).

The next 2 helical transmembrane spans lie at 15–35 (VVAVAVFLALGFAFYVFFAPF) and 44–64 (IAMGIYTPLITCVVGLYIWCA). Positions 102-125 (TGGAKSHDGTCVEDTENGSNKKLE) are disordered. The region spanning 163–213 (FYCSLCEVEVFKYSKHCRVCDKCVDRFDHHCRWLNNCIGKRNYRKFFSLMV) is the DHHC domain. C193 (S-palmitoyl cysteine intermediate) is an active-site residue. Helical transmembrane passes span 215 to 235 (AIFLLIMQWSTGIFVLVLCLL) and 254 to 274 (LIPFVIVVGVCTVLAMLATLP). Disordered stretches follow at residues 433–455 (SGRRMFPTKYEGVNNNGKQRRQS), 498–523 (QTSRAMSGSGNVMVTSSPESSLDSHD), and 549–596 (MGQQ…HKSR). A compositionally biased stretch (polar residues) spans 498–518 (QTSRAMSGSGNVMVTSSPESS). A compositionally biased stretch (low complexity) spans 549 to 571 (MGQQRGQQQQQQLSMMMMPLSRS).

Belongs to the DHHC palmitoyltransferase family.

It localises to the cell membrane. It is found in the cytoplasmic vesicle membrane. The catalysed reaction is L-cysteinyl-[protein] + hexadecanoyl-CoA = S-hexadecanoyl-L-cysteinyl-[protein] + CoA. Functionally, palmitoyl acyltransferase. This is Probable protein S-acyltransferase 22 (PAT22) from Arabidopsis thaliana (Mouse-ear cress).